We begin with the raw amino-acid sequence, 337 residues long: LIX1-like protein (337 aa).

The segment at 1 to 55 (METMRAQRLQPGVGVGGRGTLRALRPGVTGAPTSAATPPVGPPPAPPPPAPPLPP) is disordered. The span at 26-38 (PGVTGAPTSAATP) shows a compositional bias: low complexity. The span at 39 to 55 (PVGPPPAPPPPAPPLPP) shows a compositional bias: pro residues.

It belongs to the LIX1 family.

This chain is LIX1-like protein (Lix1l), found in Mus musculus (Mouse).